Here is a 430-residue protein sequence, read N- to C-terminus: uncharacterized protein (430 aa).

Residues 1-19 (MKILLFVVLFFNVLVGIYS) form the signal peptide. N-linked (GlcNAc...) asparagine glycosylation occurs at Asn39. The segment at 119–408 (LDPNSSPSPS…ELLEKNSDGN (290 aa)) is disordered. The span at 124-168 (SPSPSPSPSPSPSPSPSPSPSPSPSPSPSPSPSPSPSPSPSPSPS) shows a compositional bias: pro residues. 2 stretches are compositionally biased toward low complexity: residues 169–253 (PSSS…TPSQ) and 263–285 (PTPT…TQTP). Positions 286 to 303 (ISSRPMSISTEKPSSSEE) are enriched in polar residues. A glycan (N-linked (GlcNAc...) asparagine) is linked at Asn312. Over residues 316 to 325 (SEDKKKDSES) the composition is skewed to basic and acidic residues. Over residues 326 to 370 (KSSQSESPSPSASASESESASESASASTSVSVSASPLPIMDSSSS) the composition is skewed to low complexity. The N-linked (GlcNAc...) asparagine glycan is linked to Asn408.

The protein localises to the secreted. This is an uncharacterized protein from Dictyostelium discoideum (Social amoeba).